The following is a 1004-amino-acid chain: Ephrin type-A receptor 8 (1004 aa).

A signal peptide spans 1 to 26; the sequence is MAPARARLSPALWVVTAAAAATCVSA. Residues 27-541 lie on the Extracellular side of the membrane; the sequence is GRGEVNLLDT…KPRPRYDTRT (515 aa). The 179-residue stretch at 30–208 folds into the Eph LBD domain; the sequence is EVNLLDTSTI…YYKKCPAMVR (179 aa). Fibronectin type-III domains are found at residues 327–437 and 438–533; these read PPSA…TNQA and APSQ…TGKP. 3 N-linked (GlcNAc...) asparagine glycosylation sites follow: asparagine 339, asparagine 406, and asparagine 431. A helical membrane pass occupies residues 542 to 562; it reads IVWICLTLITGLVVLLLLLIC. A mediates interaction with ANKS1A and ANKS1B region spans residues 563–569; that stretch reads KKRHCGY. At 563–1004 the chain is on the cytoplasmic side; that stretch reads KKRHCGYSKA…SSTQGPRRHL (442 aa). The segment at 588–643 is mediates interaction with PIK3CG and required for endocytosis; the sequence is APPPVFLPLNHPPGKFPETQFSAEPHTYEEPGRAGRSFTREIEASRIHIEKIIGSG. Residue tyrosine 615 is modified to Phosphotyrosine; by autocatalysis. The Protein kinase domain maps to 634–895; it reads IHIEKIIGSG…HVVSVLDALV (262 aa). ATP is bound by residues 640 to 648 and lysine 666; that span reads IGSGESGEV. Residue aspartate 759 is the Proton acceptor of the active site. Tyrosine 838 carries the phosphotyrosine; by autocatalysis modification. One can recognise an SAM domain in the interval 929–993; the sequence is NGDLTVGDWL…LGSIQTMRAQ (65 aa). The short motif at 1002–1004 is the PDZ-binding element; that stretch reads RHL.

It belongs to the protein kinase superfamily. Tyr protein kinase family. Ephrin receptor subfamily. In terms of assembly, heterotetramer upon binding of the ligand. The heterotetramer is composed of an ephrin dimer and a receptor dimer. Oligomerization is probably required to induce biological responses. May also form heterodimers with other ephrin receptors. Interacts with FYN; possible downstream effector of EPHA8 in regulation of cell adhesion. Interacts with PIK3CG; regulates integrin-mediated cell adhesion to substrate. Interacts with TIAM1; regulates clathrin-mediated endocytosis of EPHA8. Interacts with ANKS1A and ANKS1B; EPHA8 kinase activity-independent but stimulated by EPHA8 ubiquitination. Post-translationally, phosphorylated. Phosphorylation is stimulated upon binding of its ligands including EFNA2, EFNA3 and EFNA5. Autophosphorylation on Tyr-615 is critical for association with FYN. Autophosphorylation on Tyr-838 modulates tyrosine kinase activity. Ubiquitinated. Ubiquitination by CBL regulates the receptor stability and activity through proteasomal degradation. ANKS1A prevents ubiquitination and degradation. Specifically expressed in the central nervous system.

The protein localises to the cell membrane. The protein resides in the cell projection. It localises to the early endosome membrane. The enzyme catalyses L-tyrosyl-[protein] + ATP = O-phospho-L-tyrosyl-[protein] + ADP + H(+). In terms of biological role, receptor tyrosine kinase which binds promiscuously GPI-anchored ephrin-A family ligands residing on adjacent cells, leading to contact-dependent bidirectional signaling into neighboring cells. The signaling pathway downstream of the receptor is referred to as forward signaling while the signaling pathway downstream of the ephrin ligand is referred to as reverse signaling. The GPI-anchored ephrin-A EFNA2, EFNA3, and EFNA5 are able to activate EPHA8 through phosphorylation. With EFNA5 may regulate integrin-mediated cell adhesion and migration on fibronectin substrate but also neurite outgrowth. During development of the nervous system also plays a role in axon guidance. Downstream effectors of the EPHA8 signaling pathway include FYN which promotes cell adhesion upon activation by EPHA8 and the MAP kinases in the stimulation of neurite outgrowth. This Mus musculus (Mouse) protein is Ephrin type-A receptor 8 (Epha8).